The sequence spans 1018 residues: MGSNGSELWFNKELEYSQQLTNGKMKEFFFLVSETMDWLNEHMLEVSKLQLESDIYELVRTPTKIKEKYSTPRLSPVHRCALPTPRMRLTSIQHQLEEAAVEGYKSGESNTVKEPKELHTATNTETQFDDDRDSTKLSSEYVKDDIVNKSTKGGVSPIKETRLPTNLPAFSPTSVERRFTEWNVPLRETSPSPSETADSPNKLPKQKHPAYSFVTLPKREEILKRPASLHSRVESTNSFINQLNRRRTKDNLTNNPEISLDEPIKALPSTTSDAPSSLLNTNVSSSPSKFRKFLSSVIPAKTDLSAKESLTSSTRLSTSYKTRKRSSGVAFSSETVTSSSKERKRSVENEMLKPHPTIFESPPEITSFDKSNAVEAEALTAKLKSNEERLPVSSQPGSDAKSQEFDFFEAKIPDSIAKLNELTASNENHYELKTYDRAERLRQKIQEVSSNKRLIPSTPPTKKPINAVLDAAKNSAAKDLHLAKMKLNNKNDESSLSPAKSHAVITQAPKIPLISTFTRLSTRKSSNDFNSSNSRPSSNALKSDANENTDSSLPPSKKEFIEKSLHKLSEPLHDDSRQNSDHNFAPHSRPIAIRVATASQRELEQTEKRKAKNGAANASNMESRSSENETHRFKKFYGKERELSNNEFPSRQTKTVTSANSSNIRDMEHTISDKPRSEPDAIPSSKSMHSNKPFEEKSEKPTTKRLVTNPSNVNASWHSNMLKRQEDLRKKKPLTDNGATSRHMLKSGLTRVTSKPTQRFANELAEDMSLAFHSTIPKKMEPDSVTSVTQPSVGSLRNNFDIGTTNSQNEDRKKKIAAQKNKNPVHGNVGLTNQHGFKTMHHNVNPFTKQNGIMKGKLPSSSTSQSNKPFIEKASMHAPAKGRNSSMQEPSSKSPLLKTPKSNYFPGYGSLSPNTSVELPEINSDYSDDSDDEGNKKKVNLPSWAESPELREQLKRQQKWDPDKIFGMIKPLQMDEYFRSKDRSKIRFRPRSSSADWSSQDRLTQAEIDNYKKNMGFL.

A Phosphoserine modification is found at S171. 8 disordered regions span residues V184 to K207, R247 to P287, A306 to I365, T522 to S556, E570 to P756, E781 to K813, T848 to N867, and H877 to W944. Polar residues-rich tracts occupy residues T189–S199 and P268–P287. Positions S309–Y320 are enriched in low complexity. Polar residues-rich tracts occupy residues V329–S339 and T522–P554. 2 stretches are compositionally biased toward basic and acidic residues: residues E570–S580 and R624–S644. Residues N645–I664 show a composition bias toward polar residues. 2 stretches are compositionally biased toward basic and acidic residues: residues R665–P679 and K692–T702. Composition is skewed to polar residues over residues R705 to S719 and S784 to Q808. Residues P890 to S902 are compositionally biased toward low complexity.

The protein belongs to the INCENP family. As to quaternary structure, component of the CPC complex at least composed of ark1, bir1 and pic1.

The protein localises to the nucleus. It is found in the cytoplasm. Its subcellular location is the cytoskeleton. It localises to the spindle. Functionally, component of the chromosomal passenger complex (CPC), a complex that acts as a key regulator of mitosis. Has a role in sister chromatid cohesion and condensation. This chain is Inner centromere protein pic1 (pic1), found in Schizosaccharomyces pombe (strain 972 / ATCC 24843) (Fission yeast).